The primary structure comprises 53 residues: ATP synthase protein 8 (53 aa).

Residues 4–24 (MAPISWLLLFIIFSITFILFC) form a helical membrane-spanning segment.

This sequence belongs to the ATPase protein 8 family. In terms of assembly, F-type ATPases have 2 components, CF(1) - the catalytic core - and CF(0) - the membrane proton channel.

Its subcellular location is the mitochondrion membrane. Its function is as follows. Mitochondrial membrane ATP synthase (F(1)F(0) ATP synthase or Complex V) produces ATP from ADP in the presence of a proton gradient across the membrane which is generated by electron transport complexes of the respiratory chain. F-type ATPases consist of two structural domains, F(1) - containing the extramembraneous catalytic core and F(0) - containing the membrane proton channel, linked together by a central stalk and a peripheral stalk. During catalysis, ATP synthesis in the catalytic domain of F(1) is coupled via a rotary mechanism of the central stalk subunits to proton translocation. Part of the complex F(0) domain. Minor subunit located with subunit a in the membrane. The protein is ATP synthase protein 8 (mt:ATPase8) of Drosophila mauritiana (Fruit fly).